We begin with the raw amino-acid sequence, 327 residues long: Dipeptide transport ATP-binding protein DppD (327 aa).

The ABC transporter domain occupies 4–254; the sequence is LNVDKLSVHF…PRHPYTQALL (251 aa). 40–47 provides a ligand contact to ATP; it reads GESGSGKS.

Belongs to the ABC transporter superfamily. The complex is composed of two ATP-binding proteins (DppD and DppF), two transmembrane proteins (DppB and DppC) and a solute-binding protein (DppA). MppA can replace DppA as binding protein for heme and ALA transport.

Its subcellular location is the cell inner membrane. It catalyses the reaction a dipeptide(out) + ATP + H2O = a dipeptide(in) + ADP + phosphate + H(+). In terms of biological role, part of the ABC transporter DppABCDF involved in dipeptide transport. Responsible for energy coupling to the transport system. When a foreign outer membrane heme receptor is expressed in E.coli, DppABCDF can also transport heme and its precursor, 5-aminolevulinic acid (ALA), from the periplasm into the cytoplasm. This Escherichia coli (strain K12) protein is Dipeptide transport ATP-binding protein DppD (dppD).